Consider the following 151-residue polypeptide: Ribosome maturation factor RimP (151 aa).

Belongs to the RimP family.

The protein resides in the cytoplasm. Its function is as follows. Required for maturation of 30S ribosomal subunits. This is Ribosome maturation factor RimP from Vibrio parahaemolyticus serotype O3:K6 (strain RIMD 2210633).